Consider the following 468-residue polypeptide: UDP-N-acetylmuramate--L-alanine ligase (468 aa).

ATP is bound at residue 114–120 (GTHGKTT).

This sequence belongs to the MurCDEF family.

It localises to the cytoplasm. It carries out the reaction UDP-N-acetyl-alpha-D-muramate + L-alanine + ATP = UDP-N-acetyl-alpha-D-muramoyl-L-alanine + ADP + phosphate + H(+). The protein operates within cell wall biogenesis; peptidoglycan biosynthesis. Functionally, cell wall formation. The polypeptide is UDP-N-acetylmuramate--L-alanine ligase (Methylorubrum populi (strain ATCC BAA-705 / NCIMB 13946 / BJ001) (Methylobacterium populi)).